The sequence spans 644 residues: DNA gyrase subunit B (644 aa).

The region spanning 429–543 is the Toprim domain; it reads CEIFLVEGDS…AGYVYIAQPP (115 aa). The Mg(2+) site is built by E435, D508, and D510.

It belongs to the type II topoisomerase GyrB family. In terms of assembly, heterotetramer, composed of two GyrA and two GyrB chains. In the heterotetramer, GyrA contains the active site tyrosine that forms a transient covalent intermediate with DNA, while GyrB binds cofactors and catalyzes ATP hydrolysis. Requires Mg(2+) as cofactor. Mn(2+) serves as cofactor. It depends on Ca(2+) as a cofactor.

Its subcellular location is the cytoplasm. It carries out the reaction ATP-dependent breakage, passage and rejoining of double-stranded DNA.. Functionally, a type II topoisomerase that negatively supercoils closed circular double-stranded (ds) DNA in an ATP-dependent manner to modulate DNA topology and maintain chromosomes in an underwound state. Negative supercoiling favors strand separation, and DNA replication, transcription, recombination and repair, all of which involve strand separation. Also able to catalyze the interconversion of other topological isomers of dsDNA rings, including catenanes and knotted rings. Type II topoisomerases break and join 2 DNA strands simultaneously in an ATP-dependent manner. This is DNA gyrase subunit B from Staphylococcus aureus (strain USA300).